Here is a 150-residue protein sequence, read N- to C-terminus: Arginine repressor (150 aa).

Belongs to the ArgR family.

It is found in the cytoplasm. It functions in the pathway amino-acid biosynthesis; L-arginine biosynthesis [regulation]. Regulates arginine biosynthesis genes. The chain is Arginine repressor from Staphylococcus epidermidis (strain ATCC 35984 / DSM 28319 / BCRC 17069 / CCUG 31568 / BM 3577 / RP62A).